The primary structure comprises 508 residues: Photosystem II CP47 reaction center protein (508 aa).

6 helical membrane passes run 21-36 (SVHI…WAGS), 101-115 (IMLS…IWHW), 140-156 (GIHL…FGAF), 203-218 (IAAG…FHLS), 237-252 (VLSS…AFVV), and 457-472 (SFAL…HGAR).

This sequence belongs to the PsbB/PsbC family. PsbB subfamily. In terms of assembly, PSII is composed of 1 copy each of membrane proteins PsbA, PsbB, PsbC, PsbD, PsbE, PsbF, PsbH, PsbI, PsbJ, PsbK, PsbL, PsbM, PsbT, PsbX, PsbY, PsbZ, Psb30/Ycf12, at least 3 peripheral proteins of the oxygen-evolving complex and a large number of cofactors. It forms dimeric complexes. The cofactor is Binds multiple chlorophylls. PSII binds additional chlorophylls, carotenoids and specific lipids..

The protein resides in the plastid. It localises to the chloroplast thylakoid membrane. Functionally, one of the components of the core complex of photosystem II (PSII). It binds chlorophyll and helps catalyze the primary light-induced photochemical processes of PSII. PSII is a light-driven water:plastoquinone oxidoreductase, using light energy to abstract electrons from H(2)O, generating O(2) and a proton gradient subsequently used for ATP formation. The polypeptide is Photosystem II CP47 reaction center protein (Piper cenocladum (Ant piper)).